Consider the following 431-residue polypeptide: Tol-Pal system protein TolB (431 aa).

The N-terminal stretch at 1–24 is a signal peptide; it reads MMKFLTRMLSAFAVLFFAISTAQA. The segment at 318 to 340 is disordered; sequence QVYRMSSSGGAASPVGGRGSAQI. The span at 323–332 shows a compositional bias: low complexity; it reads SSSGGAASPV.

This sequence belongs to the TolB family. In terms of assembly, the Tol-Pal system is composed of five core proteins: the inner membrane proteins TolA, TolQ and TolR, the periplasmic protein TolB and the outer membrane protein Pal. They form a network linking the inner and outer membranes and the peptidoglycan layer.

Its subcellular location is the periplasm. In terms of biological role, part of the Tol-Pal system, which plays a role in outer membrane invagination during cell division and is important for maintaining outer membrane integrity. The sequence is that of Tol-Pal system protein TolB from Mannheimia succiniciproducens (strain KCTC 0769BP / MBEL55E).